The primary structure comprises 578 residues: Putative multidrug export ATP-binding/permease protein SA1683 (578 aa).

The Cytoplasmic segment spans residues 1–15 (MIKRYLQFVKPYKYR). The chain crosses the membrane as a helical span at residues 16 to 36 (IFATIIVGIIKFGIPMLIPLL). The ABC transmembrane type-1 domain occupies 16 to 306 (IFATIIVGII…LVASFTTLTQ (291 aa)). The Extracellular portion of the chain corresponds to 37–59 (IKYAIDGVINNHALTTDEKVHHL). The helical transmembrane segment at 60–80 (TIAIGIALFIFVIVRPPIEFI) threads the bilayer. Residues 81 to 138 (RQYLAQWTSNKILYDIRKKLYNHLQALSARFYANNQVGQVISRVINDVEQTKDFILTG) lie on the Cytoplasmic side of the membrane. The chain crosses the membrane as a helical span at residues 139-159 (LMNIWLDCITIIIALSIMFFL). The Extracellular segment spans residues 160 to 162 (DVK). A helical transmembrane segment spans residues 163-183 (LTLAALFIFPFYILTVYVFFG). The Cytoplasmic portion of the chain corresponds to 184-244 (RLRKLTRERS…TRALKHTRWN (61 aa)). Residues 245-263 (AYSFAAINTVTDIGPIIVI) traverse the membrane as a helical segment. Residues 264–269 (GVGAYL) lie on the Extracellular side of the membrane. The helical transmembrane segment at 270 to 287 (AISGSITVGTLAAFVGYL) threads the bilayer. The Cytoplasmic segment spans residues 288–578 (ELLFGPLRRL…YEHLYSIQNL (291 aa)). The ABC transporter domain occupies 340 to 575 (IDIDHVSFQY…QGAYEHLYSI (236 aa)). 374–381 (GMSGGGKS) is an ATP binding site.

Belongs to the ABC transporter superfamily. Homodimer.

It is found in the cell membrane. Its function is as follows. May be involved in multidrug export. Transmembrane domains (TMD) form a pore in the cell membrane and the ATP-binding domain (NBD) is responsible for energy generation. The protein is Putative multidrug export ATP-binding/permease protein SA1683 of Staphylococcus aureus (strain N315).